Reading from the N-terminus, the 200-residue chain is NADH-quinone oxidoreductase subunit C (200 aa).

Belongs to the complex I 30 kDa subunit family. As to quaternary structure, NDH-1 is composed of 14 different subunits. Subunits NuoB, C, D, E, F, and G constitute the peripheral sector of the complex.

It localises to the cell inner membrane. The catalysed reaction is a quinone + NADH + 5 H(+)(in) = a quinol + NAD(+) + 4 H(+)(out). Its function is as follows. NDH-1 shuttles electrons from NADH, via FMN and iron-sulfur (Fe-S) centers, to quinones in the respiratory chain. The immediate electron acceptor for the enzyme in this species is believed to be ubiquinone. Couples the redox reaction to proton translocation (for every two electrons transferred, four hydrogen ions are translocated across the cytoplasmic membrane), and thus conserves the redox energy in a proton gradient. This chain is NADH-quinone oxidoreductase subunit C, found in Agrobacterium fabrum (strain C58 / ATCC 33970) (Agrobacterium tumefaciens (strain C58)).